We begin with the raw amino-acid sequence, 111 residues long: Probable 4-amino-4-deoxy-L-arabinose-phosphoundecaprenol flippase subunit ArnE (111 aa).

The next 3 helical transmembrane spans lie at 37-57, 65-85, and 91-111; these read LIWL…WLKL, QAYP…HFFF, and LQHW…GQGI.

The protein belongs to the ArnE family. In terms of assembly, heterodimer of ArnE and ArnF.

It is found in the cell inner membrane. Its pathway is bacterial outer membrane biogenesis; lipopolysaccharide biosynthesis. Translocates 4-amino-4-deoxy-L-arabinose-phosphoundecaprenol (alpha-L-Ara4N-phosphoundecaprenol) from the cytoplasmic to the periplasmic side of the inner membrane. In Hamiltonella defensa subsp. Acyrthosiphon pisum (strain 5AT), this protein is Probable 4-amino-4-deoxy-L-arabinose-phosphoundecaprenol flippase subunit ArnE.